The primary structure comprises 380 residues: MANIRKTHPLLKIINGAFIDLPTPSNISVWWNFGSLLGLCLITQILTGLFLAMHYTADISTAFSSVAHICRDVNYGWLIRNIHANGASFFFICLYLHVARGMYYGSYLQKETWNIGVILLLLTMMTAFVGYVLPWGQMSFWGATVITNLLSAFPDIGDTLVQWIWGGFSVDNATLTRFFAFHFLLPFVIAGASMIHLLFLHQTGSNNPTGLNSDADKVTFHPYFSYKDLFGFTLMLVGLTSVALFSPNLLGDPDNFTPANPLVTPPHIKPEWYFLFAYAILRSIPNKLGGVLALLFSILVLMLVPMLHTSKQRGNTFRPLSQILFWALVADMLVLTWIGGQPVEHPFVLIGQVASTVYFALFLIALPLTGWLENKALNWN.

Helical transmembrane passes span Phe-33–Met-53, Trp-77–Val-98, Trp-113–Leu-133, and Phe-178–Leu-198. Heme b contacts are provided by His-83 and His-97. Heme b-binding residues include His-182 and His-196. A ubiquinone is bound at residue His-201. Transmembrane regions (helical) follow at residues Tyr-226–Ser-246, Leu-288–His-308, Leu-320–Gly-340, and Phe-347–Pro-367.

It belongs to the cytochrome b family. In terms of assembly, the cytochrome bc1 complex contains 3 respiratory subunits (MT-CYB, CYC1 and UQCRFS1), 2 core proteins (UQCRC1 and UQCRC2) and probably 6 low-molecular weight proteins. Heme b serves as cofactor.

The protein localises to the mitochondrion inner membrane. In terms of biological role, component of the ubiquinol-cytochrome c reductase complex (complex III or cytochrome b-c1 complex) that is part of the mitochondrial respiratory chain. The b-c1 complex mediates electron transfer from ubiquinol to cytochrome c. Contributes to the generation of a proton gradient across the mitochondrial membrane that is then used for ATP synthesis. In Acipenser transmontanus (White sturgeon), this protein is Cytochrome b (mt-cyb).